Consider the following 275-residue polypeptide: Hydroxyethylthiazole kinase (275 aa).

A substrate-binding site is contributed by Met57. ATP-binding residues include Arg132 and Ser178. Residue Gly205 coordinates substrate.

This sequence belongs to the Thz kinase family. The cofactor is Mg(2+).

The catalysed reaction is 5-(2-hydroxyethyl)-4-methylthiazole + ATP = 4-methyl-5-(2-phosphooxyethyl)-thiazole + ADP + H(+). It functions in the pathway cofactor biosynthesis; thiamine diphosphate biosynthesis; 4-methyl-5-(2-phosphoethyl)-thiazole from 5-(2-hydroxyethyl)-4-methylthiazole: step 1/1. Its function is as follows. Catalyzes the phosphorylation of the hydroxyl group of 4-methyl-5-beta-hydroxyethylthiazole (THZ). The chain is Hydroxyethylthiazole kinase from Clavibacter sepedonicus (Clavibacter michiganensis subsp. sepedonicus).